We begin with the raw amino-acid sequence, 738 residues long: Interleukin-17 receptor D (738 aa).

The signal sequence occupies residues 1–16 (MAPWLQLCSFFFTVNA). Topologically, residues 17–299 (CLNGSQLAVA…VQSPWAGPIR (283 aa)) are extracellular. Residues N19, N55, N62, N80, N137, N171, N206, and N277 are each glycosylated (N-linked (GlcNAc...) asparagine). A helical transmembrane segment spans residues 300–320 (AVAITVPLVVISAFATLFTVM). The Cytoplasmic segment spans residues 321–738 (CRKKQQENIY…TDELQALAPL (418 aa)). The region spanning 355–509 (QPKVFLCYSN…LMDHLPELCA (155 aa)) is the SEFIR domain. Positions 653-738 (GSPSEMPRDS…TDELQALAPL (86 aa)) are disordered. Residues 667–702 (SSVPSSELSLPLMEGLSPDQIETSSLTESVSSSSGL) show a composition bias toward low complexity. Positions 720–731 (SREHGCHSHTDE) are enriched in basic and acidic residues.

Self-associates. Interacts with FGFR2 and phosphorylated MAP2K1 or MAP2K2. Associates with a MAP2K1/2-MAPK1/3 complex. Interacts with FGFR1 and MAP3K7.

It localises to the golgi apparatus membrane. Its subcellular location is the cell membrane. Functionally, feedback inhibitor of fibroblast growth factor mediated Ras-MAPK signaling and ERK activation. Regulates the nuclear ERK signaling pathway by spatially blocking nuclear translocation of activated ERK. Mediates JNK activation and may be involved in apoptosis. May inhibit FGF-induced FGFR1 tyrosine phosphorylation. Might have a role in the early stages of fate specification of GnRH-secreting neurons. Inhibits TGFB-induced epithelial-to-mesenchymal transition in lens epithelial cells. This chain is Interleukin-17 receptor D (Il17rd), found in Mus musculus (Mouse).